Consider the following 657-residue polypeptide: Splicing factor Cactin (657 aa).

A compositionally biased stretch (basic residues) spans 1–15 (MGKDSKKHKKERRRE). Disordered regions lie at residues 1-83 (MGKD…EDTL), 369-406 (QESE…ISKK), and 472-503 (ADVD…QGAS). Coiled coils occupy residues 23–77 (SDEE…RKDA) and 352–403 (RLQL…DEKI). A compositionally biased stretch (basic and acidic residues) spans 26–60 (ERLQKRLAEQRSLKKDEKRRQKEEMKKNESAEEKR). Residues 61–72 (ARRMEKKMRKDA) show a composition bias toward basic residues. Residues 389 to 401 (EEEEEEEEDEDDE) show a composition bias toward acidic residues. Positions 489–503 (PSSSAASSGAPQGAS) are enriched in low complexity.

It belongs to the CACTIN family. As to expression, expressed in pharynx, intestine, vulva and spermatheca (at protein level).

Its subcellular location is the nucleus. The protein localises to the cytoplasm. Plays a role in pre-mRNA splicing by facilitating excision of a subset of introns. Plays a role during early embryonic development. Required for the distal tip cell migration at the end of larval development and for gonad morphogenesis. The sequence is that of Splicing factor Cactin (cacn-1) from Caenorhabditis elegans.